Reading from the N-terminus, the 237-residue chain is Oil body-associated protein 2C (237 aa).

Belongs to the OBAP family.

The protein is Oil body-associated protein 2C of Arabidopsis thaliana (Mouse-ear cress).